Consider the following 615-residue polypeptide: Proteasome-associated ATPase (615 aa).

Over residues Met1 to Gly13 the composition is skewed to basic and acidic residues. The disordered stretch occupies residues Met1 to Glu32. The stretch at Leu22–Gln100 forms a coiled coil. Gly302–Leu307 contacts ATP. The segment at Tyr614 to Leu615 is docks into pockets in the proteasome alpha-ring.

It belongs to the AAA ATPase family. Homohexamer. Assembles into a hexameric ring structure that caps the 20S proteasome core. Strongly interacts with the prokaryotic ubiquitin-like protein Pup through a hydrophobic interface; the interacting region of ARC lies in its N-terminal coiled-coil domain. There is one Pup binding site per ARC hexamer ring. Upon ATP-binding, the C-terminus of ARC interacts with the alpha-rings of the proteasome core, possibly by binding to the intersubunit pockets.

Its pathway is protein degradation; proteasomal Pup-dependent pathway. Functionally, ATPase which is responsible for recognizing, binding, unfolding and translocation of pupylated proteins into the bacterial 20S proteasome core particle. May be essential for opening the gate of the 20S proteasome via an interaction with its C-terminus, thereby allowing substrate entry and access to the site of proteolysis. Thus, the C-termini of the proteasomal ATPase may function like a 'key in a lock' to induce gate opening and therefore regulate proteolysis. In Mycobacterium sp. (strain JLS), this protein is Proteasome-associated ATPase.